Consider the following 499-residue polypeptide: Probable cytosol aminopeptidase (499 aa).

Mn(2+)-binding residues include Lys262 and Asp267. The active site involves Lys274. The Mn(2+) site is built by Asp285, Asp344, and Glu346. The active site involves Arg348.

It belongs to the peptidase M17 family. The cofactor is Mn(2+).

It localises to the cytoplasm. It catalyses the reaction Release of an N-terminal amino acid, Xaa-|-Yaa-, in which Xaa is preferably Leu, but may be other amino acids including Pro although not Arg or Lys, and Yaa may be Pro. Amino acid amides and methyl esters are also readily hydrolyzed, but rates on arylamides are exceedingly low.. It carries out the reaction Release of an N-terminal amino acid, preferentially leucine, but not glutamic or aspartic acids.. In terms of biological role, presumably involved in the processing and regular turnover of intracellular proteins. Catalyzes the removal of unsubstituted N-terminal amino acids from various peptides. The sequence is that of Probable cytosol aminopeptidase from Protochlamydia amoebophila (strain UWE25).